Consider the following 513-residue polypeptide: Acetylcholine receptor subunit delta (513 aa).

The first 18 residues, 1–18, serve as a signal peptide directing secretion; the sequence is MAVLLALFGALVLSGGLC. Over 19-244 the chain is Extracellular; the sequence is VNQEERLIHH…ITFYLIIKRK (226 aa). Asparagine 88 and asparagine 161 each carry an N-linked (GlcNAc...) asparagine glycan. A disulfide bond links cysteine 148 and cysteine 162. A run of 3 helical transmembrane segments spans residues 245–269, 277–295, and 311–332; these read PLFY…VFYL, MTLV…LLVS, and YLLF…VLNF. At 333-467 the chain is on the cytoplasmic side; sequence HFRTPSTHVM…WNRVARTLDR (135 aa). Position 388 is a phosphotyrosine; by Tyr-kinases (tyrosine 388). A helical transmembrane segment spans residues 468 to 490; the sequence is LCLFLITPMLVVGTLWIFLMGIY.

It belongs to the ligand-gated ion channel (TC 1.A.9) family. Acetylcholine receptor (TC 1.A.9.1) subfamily. Pentamer of two alpha chains, and one each of the beta, delta, and gamma chains.

It is found in the postsynaptic cell membrane. The protein localises to the cell membrane. The catalysed reaction is K(+)(in) = K(+)(out). It carries out the reaction Na(+)(in) = Na(+)(out). Its function is as follows. After binding acetylcholine, the AChR responds by an extensive change in conformation that affects all subunits and leads to opening of an ion-conducting channel across the plasma membrane. In Gallus gallus (Chicken), this protein is Acetylcholine receptor subunit delta (CHRND).